Consider the following 592-residue polypeptide: uncharacterized protein (592 aa).

This is an uncharacterized protein from Saccharolobus solfataricus (strain ATCC 35092 / DSM 1617 / JCM 11322 / P2) (Sulfolobus solfataricus).